The following is a 201-amino-acid chain: Recombination protein RecR (201 aa).

Residues 60 to 75 (CKVCGNIDTQNPCTVC) form a C4-type zinc finger. Residues 83–178 (SIIVVVADVA…KVTRLAHGVP (96 aa)) enclose the Toprim domain.

Belongs to the RecR family.

Its function is as follows. May play a role in DNA repair. It seems to be involved in an RecBC-independent recombinational process of DNA repair. It may act with RecF and RecO. This is Recombination protein RecR from Rhodopseudomonas palustris (strain BisB18).